We begin with the raw amino-acid sequence, 250 residues long: rRNA methyltransferase 2, mitochondrial (250 aa).

A mitochondrion-targeting transit peptide spans 1–35 (MRLVFTGNCVFKRLLHTEIGGKYAKQQPRNLKGRS). Residues 90–93 (PGSW), aspartate 119, 136–137 (DF), and aspartate 161 contribute to the S-adenosyl-L-methionine site. The Proton acceptor role is filled by lysine 201.

The protein belongs to the class I-like SAM-binding methyltransferase superfamily. RNA methyltransferase RlmE family.

The protein localises to the mitochondrion. The enzyme catalyses a uridine in rRNA + S-adenosyl-L-methionine = a 2'-O-methyluridine in rRNA + S-adenosyl-L-homocysteine + H(+). S-adenosyl-L-methionine-dependent 2'-O-ribose methyltransferase that catalyzes the formation of 2'-O-methyluridine at position 1579 (Um1579) in the mitochondrial large subunit ribosomal RNA (mtLSU rRNA), a universally conserved modification in the peptidyl transferase domain of the mtLSU rRNA. This activity may require prior 2'-O-methylguanosine modification at position 1580 (Gm1580) by MRM3. Essential for late-stage assembly of mtLSU required for efficient translation of mitochondrial DNA encoded proteins; methyltransferase activity is not required for this function. Essential for mitochondrial respiratory function. The polypeptide is rRNA methyltransferase 2, mitochondrial (Drosophila melanogaster (Fruit fly)).